The following is a 363-amino-acid chain: Aminomethyltransferase (363 aa).

The protein belongs to the GcvT family. In terms of assembly, the glycine cleavage system is composed of four proteins: P, T, L and H.

It carries out the reaction N(6)-[(R)-S(8)-aminomethyldihydrolipoyl]-L-lysyl-[protein] + (6S)-5,6,7,8-tetrahydrofolate = N(6)-[(R)-dihydrolipoyl]-L-lysyl-[protein] + (6R)-5,10-methylene-5,6,7,8-tetrahydrofolate + NH4(+). The glycine cleavage system catalyzes the degradation of glycine. This chain is Aminomethyltransferase, found in Staphylococcus haemolyticus (strain JCSC1435).